Here is a 106-residue protein sequence, read N- to C-terminus: uncharacterized protein (106 aa).

It localises to the mitochondrion. This is an uncharacterized protein from Claviceps purpurea (Ergot fungus).